The sequence spans 472 residues: Probable glycine dehydrogenase (decarboxylating) subunit 2 (472 aa).

N6-(pyridoxal phosphate)lysine is present on Lys268.

This sequence belongs to the GcvP family. C-terminal subunit subfamily. In terms of assembly, the glycine cleavage system is composed of four proteins: P, T, L and H. In this organism, the P 'protein' is a heterodimer of two subunits. Pyridoxal 5'-phosphate is required as a cofactor.

It catalyses the reaction N(6)-[(R)-lipoyl]-L-lysyl-[glycine-cleavage complex H protein] + glycine + H(+) = N(6)-[(R)-S(8)-aminomethyldihydrolipoyl]-L-lysyl-[glycine-cleavage complex H protein] + CO2. In terms of biological role, the glycine cleavage system catalyzes the degradation of glycine. The P protein binds the alpha-amino group of glycine through its pyridoxal phosphate cofactor; CO(2) is released and the remaining methylamine moiety is then transferred to the lipoamide cofactor of the H protein. In Thermoplasma acidophilum (strain ATCC 25905 / DSM 1728 / JCM 9062 / NBRC 15155 / AMRC-C165), this protein is Probable glycine dehydrogenase (decarboxylating) subunit 2.